Reading from the N-terminus, the 215-residue chain is Protein-methionine-sulfoxide reductase heme-binding subunit MsrQ (215 aa).

The next 6 helical transmembrane spans lie at 17-37, 50-70, 85-105, 121-141, 152-172, and 177-197; these read AAIWSLYVIGLCPGLWYFYLA, FEHLLGIWALRFLCLGLLVTP, ALGLIAFYYVLAHFTVYLVLD, PYIMLGMAGLIILIPLALTSN, WNTLHKLVYLVLIVGVLHFVL, and ITLEPVFYISTMVVLLGYRLV.

The protein belongs to the MsrQ family. In terms of assembly, heterodimer of a catalytic subunit (MsrP) and a heme-binding subunit (MsrQ). The cofactor is FMN. Requires heme b as cofactor.

The protein resides in the cell inner membrane. Part of the MsrPQ system that repairs oxidized periplasmic proteins containing methionine sulfoxide residues (Met-O), using respiratory chain electrons. Thus protects these proteins from oxidative-stress damage caused by reactive species of oxygen and chlorine generated by the host defense mechanisms. MsrPQ is essential for the maintenance of envelope integrity under bleach stress, rescuing a wide series of structurally unrelated periplasmic proteins from methionine oxidation. MsrQ provides electrons for reduction to the reductase catalytic subunit MsrP, using the quinone pool of the respiratory chain. The protein is Protein-methionine-sulfoxide reductase heme-binding subunit MsrQ of Agrobacterium fabrum (strain C58 / ATCC 33970) (Agrobacterium tumefaciens (strain C58)).